The primary structure comprises 403 residues: Argininosuccinate synthase (403 aa).

ATP-binding positions include 13–21 (AYSGGLDTS) and A40. Positions 92 and 97 each coordinate L-citrulline. G122 serves as a coordination point for ATP. L-aspartate-binding residues include T124, N128, and D129. N128 contributes to the L-citrulline binding site. L-citrulline is bound by residues R132, S181, S190, E266, and Y278.

This sequence belongs to the argininosuccinate synthase family. Type 1 subfamily. Homotetramer.

It is found in the cytoplasm. It catalyses the reaction L-citrulline + L-aspartate + ATP = 2-(N(omega)-L-arginino)succinate + AMP + diphosphate + H(+). The protein operates within amino-acid biosynthesis; L-arginine biosynthesis; L-arginine from L-ornithine and carbamoyl phosphate: step 2/3. The chain is Argininosuccinate synthase from Aliivibrio salmonicida (strain LFI1238) (Vibrio salmonicida (strain LFI1238)).